The following is a 140-amino-acid chain: MAYTNKVTISAAVATMMLFLAVTIVDAQSMPPMPKFNPVCALADLPNIVQLCYFNLDLTPSEECCNDLKSSSTIQVNCLCDNFIAHPSNGNISQARYDLVNSACGVADKFACKGGDASGGSTNKIAASMVLLGLVASLFF.

Residues Met-1 to Ala-27 form the signal peptide. 4 disulfide bridges follow: Cys-40–Cys-80, Cys-52–Cys-64, Cys-65–Cys-104, and Cys-78–Cys-112. Asn-91 carries N-linked (GlcNAc...) asparagine glycosylation. Gly-115 carries GPI-anchor amidated glycine lipidation. The propeptide at Asp-116–Phe-140 is removed in mature form.

Belongs to the plant LTP family.

The protein resides in the cell membrane. Probable lipid transfer protein. The chain is Non-specific lipid transfer protein GPI-anchored 33 from Arabidopsis thaliana (Mouse-ear cress).